Here is a 218-residue protein sequence, read N- to C-terminus: DNA-binding protein HU 2 (218 aa).

The interval 1–91 is bacterial histone-like domain; the sequence is MNKAQLVEAI…QGFKDLVSGS (91 aa). The tract at residues 101–218 is disordered; the sequence is VKKAPKGSLS…TAKKATARKK (118 aa). The degenerate repeats region stretch occupies residues 118-218; the sequence is KAAGKKAAAK…TAKKATARKK (101 aa). Over residues 127–161 the composition is skewed to low complexity; that stretch reads KKATGAAKKTTGAAKKTSAAAKKTTAKKTTGAAKT. Positions 162–172 are enriched in basic residues; sequence TAKKTTAKKSA. The segment covering 173–182 has biased composition (low complexity); that stretch reads AKTTTAAAKK. Basic residues predominate over residues 183 to 218; it reads TAAKKAPAKKATAKKAPAKKSTARKTTAKKATARKK.

The protein belongs to the bacterial histone-like protein family. Long actinobacterial subfamily. As to quaternary structure, homodimer.

It is found in the cytoplasm. The protein localises to the nucleoid. Its function is as follows. Histone-like DNA-binding protein which is capable of wrapping DNA to stabilize it, and thus to prevent its denaturation under extreme environmental conditions. The sequence is that of DNA-binding protein HU 2 (hup2) from Streptomyces coelicolor (strain ATCC BAA-471 / A3(2) / M145).